Reading from the N-terminus, the 166-residue chain is 3-hydroxyacyl-[acyl-carrier-protein] dehydratase FabZ (166 aa).

H72 is an active-site residue.

This sequence belongs to the thioester dehydratase family. FabZ subfamily.

It is found in the cytoplasm. It catalyses the reaction a (3R)-hydroxyacyl-[ACP] = a (2E)-enoyl-[ACP] + H2O. Its function is as follows. Involved in unsaturated fatty acids biosynthesis. Catalyzes the dehydration of short chain beta-hydroxyacyl-ACPs and long chain saturated and unsaturated beta-hydroxyacyl-ACPs. This chain is 3-hydroxyacyl-[acyl-carrier-protein] dehydratase FabZ, found in Synechococcus sp. (strain JA-3-3Ab) (Cyanobacteria bacterium Yellowstone A-Prime).